The following is a 70-amino-acid chain: Conotoxin Im11.11 (70 aa).

An N-terminal signal peptide occupies residues 1–25 (MFRLTSVGCILLVIAFLNLVGLTNA). Disulfide bonds link Cys-26-Cys-40, Cys-33-Cys-45, Cys-39-Cys-49, and Cys-44-Cys-53. The residue at position 56 (Pro-56) is a Proline amide. Positions 60 to 70 (TRLQGFFKHRR) are excised as a propeptide.

The protein belongs to the conotoxin I2 superfamily. As to expression, expressed by the venom duct.

Its subcellular location is the secreted. Probable neurotoxin. This is Conotoxin Im11.11 from Conus imperialis (Imperial cone).